A 365-amino-acid polypeptide reads, in one-letter code: MSKQVVVVGGGVIGLLTAFNLAAKVGQVVVCDQGEVGRESSWAGGGIVSPLYPWRYSPAVTALAHWSQDFYPQLGERLFASTGVDPEVHTTGLYWLDLDDEAEALAWAAREQRPLSAVDISAAYDAVPVLGPGFKHAIYMAGVANVRNPRLVKSLKAALLALPNVSLREHCQITGFVQEKGRVTGVQTADGVLAADEVVLSAGAWSGDLLRTLGLELPVEPVKGQMILFKCAEDFLPSMVLAKGRYAIPRRDGHILVGSTLEHAGYDKTPTADALESLKASAVELLPELEGATVVAHWAGLRPGSPEGIPYIGPVPGHEGLWLNCGHYRNGLVLAPASCQLFTDLLTGAEPIIDPAPYAPEGRLG.

Residues Val12 to Ile13, Asp32 to Gln33, Ser40 to Ser41, Gly45 to Ile47, and Ile173 contribute to the FAD site. Substrate is bound at residue Arg302. His327–Val333 is a binding site for FAD.

This sequence belongs to the DAO family. ThiO subfamily. As to quaternary structure, monomer. The cofactor is FAD.

The enzyme catalyses glycine + O2 + H2O = glyoxylate + H2O2 + NH4(+). The catalysed reaction is sarcosine + O2 + H2O = methylamine + glyoxylate + H2O2. Its pathway is cofactor biosynthesis; thiamine diphosphate biosynthesis. Its function is as follows. Catalyzes the oxidation of glycine, leading to glyoxyl imine and hydrogen peroxide as primary products; glyoxyl imine is used for the biosynthesis of the thiazole ring of thiamine. Otherwise, glyoxyl imine is spontaneously hydrolyzed in water to produce glyoxylate and ammonia. Can also use sarcosine (N-methylglycine) as substrate, and, to a lesser extent, N-ethylglycine and D-proline. Has no activity towards other amino-acids D-Asp, D-Glu, D-Gln, D-His, D-Leu, D-Lys, D-ornithine, D-Trp, D-Val, L-Ala, L-Asp, L-Glu, L-His, L-Leu, L-Lys, L-Met and L-Pro. The sequence is that of Glycine oxidase from Pseudomonas putida (strain ATCC 47054 / DSM 6125 / CFBP 8728 / NCIMB 11950 / KT2440).